We begin with the raw amino-acid sequence, 311 residues long: uncharacterized protein (311 aa).

The helical transmembrane segment at 168–188 (FNVMKGAILGLPIIGGIIVGV) threads the bilayer.

The protein resides in the cell membrane. This is an uncharacterized protein from Edwardsiella tarda.